A 763-amino-acid polypeptide reads, in one-letter code: Phospholipid phosphatase-related protein type 4 (763 aa).

Residues 33-54 (VHTSPGGGRRPGQAAGMSAKER) are disordered. Ser-36 is modified (phosphoserine). 3 helical membrane-spanning segments follow: residues 67 to 87 (LPCF…SLYF), 119 to 139 (AIPF…TIMV), and 178 to 198 (FVGV…IIQL). 2 N-linked (GlcNAc...) asparagine glycosylation sites follow: Asn-214 and Asn-219. The chain crosses the membrane as a helical span at residues 247–267 (SFPSQHATLAAFAAVYVSMYF). N-linked (GlcNAc...) asparagine glycosylation is present at Asn-268. 2 helical membrane passes run 276-296 (KLLK…CGLT) and 308-328 (VYCG…YAVG). Ser-346 bears the Phosphoserine mark. N-linked (GlcNAc...) asparagine glycosylation occurs at Asn-362. Phosphoserine is present on Ser-385. A glycan (N-linked (GlcNAc...) asparagine) is linked at Asn-432. Residue Ser-438 is modified to Phosphoserine. Residue Asn-455 is glycosylated (N-linked (GlcNAc...) asparagine). The segment at 458 to 529 (RKLSLQVIEP…PRVSIQSRPG (72 aa)) is disordered. 2 positions are modified to phosphoserine: Ser-461 and Ser-472. Residues Asn-513, Asn-543, and Asn-568 are each glycosylated (N-linked (GlcNAc...) asparagine). Phosphoserine is present on Ser-606. Residues 669-694 (DSESCESLKDSFGSGDRKRSNIDSNE) are compositionally biased toward basic and acidic residues. 2 disordered regions span residues 669-698 (DSES…HHHH) and 739-763 (ERSN…AYKD). Over residues 740–749 (RSNSPENTRN) the composition is skewed to polar residues.

This sequence belongs to the PA-phosphatase related phosphoesterase family. In terms of processing, O-glycosylated. Probably at Ser-346. As to expression, expressed by glutamatergic neurons (at protein level).

It localises to the postsynaptic density membrane. Postsynaptic density membrane protein that indirectly regulates glutamatergic synaptic transmission through lysophosphatidic acid (LPA)-mediated signaling pathways. Binds lysophosphatidic acid (LPA) and mediates its internalization into cells. Could act as receptor or a transporter of this lipid at the post-synaptic membrane. Modulates lysophosphatidic acid (LPA) activity in neuron axonal outgrowth during development by attenuating phospholipid-induced axon collapse. The polypeptide is Phospholipid phosphatase-related protein type 4 (Homo sapiens (Human)).